The sequence spans 692 residues: Ino eighty subunit 1 (692 aa).

Over residues 1-25 (MGKRVYDPIHDTFQLREDNSDETKA) the composition is skewed to basic and acidic residues. The interval 1 to 133 (MGKRVYDPIH…RHLKKPDGEP (133 aa)) is disordered. The residue at position 27 (S27) is a Phosphoserine. Residues 28 to 56 (PMQSVKSGSQEEASPSSIQSETETVTTKS) are compositionally biased toward polar residues. Positions 64 to 80 (EIDDKNDDDSTQSEEEN) are enriched in acidic residues. Polar residues predominate over residues 97–109 (GASTATGPVTTNT). Residues 340–385 (SKYVEVESKAQEQDMVDEQNEVKETEAENEKQESKAAYATTLFDIL) adopt a coiled-coil conformation. Residues 465–485 (FMSKMEEGRKRERTNVTEVKK) are compositionally biased toward basic and acidic residues. The tract at residues 465–550 (FMSKMEEGRK…VTPAAPTETE (86 aa)) is disordered. Phosphoserine is present on residues S487, S493, and S504. The span at 493 to 504 (SEEDGEGEDDKS) shows a compositional bias: acidic residues. T507 carries the post-translational modification Phosphothreonine. Over residues 513 to 528 (SLLTPTPILESSSPMT) the composition is skewed to polar residues.

In terms of assembly, component of the chromatin-remodeling INO80 complex, at least composed of ARP4, ARP5, ARP8, RVB1, RVB2, TAF14, NHP10, IES1, IES3, IES4, IES6, ACT1, IES2, IES5 and INO80.

Its subcellular location is the nucleus. In terms of biological role, probably involved in transcription regulation via its interaction with the INO80 complex, a chromatin-remodeling complex. In Saccharomyces cerevisiae (strain ATCC 204508 / S288c) (Baker's yeast), this protein is Ino eighty subunit 1 (IES1).